Consider the following 458-residue polypeptide: Dihydrolipoyl dehydrogenase (458 aa).

Residues 30-38 (DKGKLGGTC), lysine 47, and alanine 112 contribute to the FAD site. The cysteines at positions 38 and 43 are disulfide-linked. NAD(+) is bound by residues 177–181 (GGGVI), glutamate 200, and 263–266 (AIGR). Residues aspartate 305 and alanine 313 each coordinate FAD. Histidine 437 serves as the catalytic Proton acceptor.

Belongs to the class-I pyridine nucleotide-disulfide oxidoreductase family. As to quaternary structure, homodimer. Requires FAD as cofactor.

The protein localises to the cytoplasm. The catalysed reaction is N(6)-[(R)-dihydrolipoyl]-L-lysyl-[protein] + NAD(+) = N(6)-[(R)-lipoyl]-L-lysyl-[protein] + NADH + H(+). Its pathway is ketone degradation; acetoin degradation. This chain is Dihydrolipoyl dehydrogenase (acoL), found in Bacillus subtilis (strain 168).